The sequence spans 312 residues: Formimidoylglutamase (312 aa).

His-123, Asp-152, His-154, Asp-156, Cys-243, and Asp-245 together coordinate Mn(2+).

The protein belongs to the arginase family. The cofactor is Mn(2+).

It carries out the reaction N-formimidoyl-L-glutamate + H2O = formamide + L-glutamate. It participates in amino-acid degradation; L-histidine degradation into L-glutamate; L-glutamate from N-formimidoyl-L-glutamate (hydrolase route): step 1/1. Catalyzes the conversion of N-formimidoyl-L-glutamate to L-glutamate and formamide. The chain is Formimidoylglutamase from Pseudomonas fluorescens (strain ATCC BAA-477 / NRRL B-23932 / Pf-5).